The following is a 400-amino-acid chain: Protein phosphatase methylesterase 1 (400 aa).

The tract at residues 32 to 70 (DENDGDALGSLPSFNGQSNRNRKYTGKTGSTTDRISSKE) is disordered. In terms of domain architecture, AB hydrolase-1 spans 114–365 (PIFIFHHGAG…DSGHFIQEDS (252 aa)). Active-site residues include S205, D233, and H359.

It belongs to the AB hydrolase superfamily. Interacts with and inactivates the phosphatase PP2A-like catalytic subunits PPG1, PPH21, PPH22, PPH3 and SIT4.

The catalysed reaction is [phosphatase 2A protein]-C-terminal L-leucine methyl ester + H2O = [phosphatase 2A protein]-C-terminal L-leucine + methanol + H(+). In terms of biological role, demethylates proteins that have been reversibly carboxymethylated. Demethylates the phosphatase PP2A catalytic subunits PPH21 and PPH22. Forms inactive complexes (PP2Ai) with phosphatase PP2A-like catalytic subunits. Involved in the regulation of cell cycle progression at START. This Saccharomyces cerevisiae (strain ATCC 204508 / S288c) (Baker's yeast) protein is Protein phosphatase methylesterase 1 (PPE1).